The sequence spans 166 residues: Regulatory protein RecX (166 aa).

Belongs to the RecX family.

It localises to the cytoplasm. In terms of biological role, modulates RecA activity. The chain is Regulatory protein RecX from Salmonella paratyphi C (strain RKS4594).